We begin with the raw amino-acid sequence, 311 residues long: Probable deoxyhypusine synthase (311 aa).

Residue lysine 284 is the Nucleophile of the active site.

The protein belongs to the deoxyhypusine synthase family. Requires NAD(+) as cofactor.

It carries out the reaction [eIF5A protein]-L-lysine + spermidine = [eIF5A protein]-deoxyhypusine + propane-1,3-diamine. The protein operates within protein modification; eIF5A hypusination. In terms of biological role, catalyzes the NAD-dependent oxidative cleavage of spermidine and the subsequent transfer of the butylamine moiety of spermidine to the epsilon-amino group of a specific lysine residue of the eIF-5A precursor protein to form the intermediate deoxyhypusine residue. The sequence is that of Probable deoxyhypusine synthase from Picrophilus torridus (strain ATCC 700027 / DSM 9790 / JCM 10055 / NBRC 100828 / KAW 2/3).